The sequence spans 194 residues: Inner membrane-spanning protein YciB (194 aa).

A run of 5 helical transmembrane segments spans residues 1–21, 49–69, 77–97, 120–140, and 150–170; these read MKLL…KTTN, EKMH…TILF, WKPS…GWVS, LNYS…YVAY, and FKLF…GVYI.

It belongs to the YciB family.

The protein resides in the cell inner membrane. Its function is as follows. Plays a role in cell envelope biogenesis, maintenance of cell envelope integrity and membrane homeostasis. The protein is Inner membrane-spanning protein YciB of Hahella chejuensis (strain KCTC 2396).